Reading from the N-terminus, the 588-residue chain is Zeta-carotene desaturase, chloroplastic/chromoplastic (588 aa).

The N-terminal 49 residues, 1–49, are a transit peptide targeting the chloroplast and chromoplast; that stretch reads MATCSAYLCCPATSASLKKRVFPDGSAGFLFFGGRRLSNRLVTPKSVIR.

It belongs to the zeta carotene desaturase family. Monomer and dimer. The cofactor is decylplastoquinone. 6-decylubiquinone is required as a cofactor.

It localises to the plastid. The protein resides in the chloroplast. Its subcellular location is the chromoplast. It carries out the reaction 9,9'-di-cis-zeta-carotene + 2 a quinone = 7,7',9,9'-tetra-cis-lycopene + 2 a quinol. The protein operates within carotenoid biosynthesis; lycopene biosynthesis. Functionally, catalyzes the conversion of zeta-carotene to lycopene via the intermediary of neurosporene. It carries out two consecutive desaturations (introduction of double bonds) at positions C-7 and C-7'. Shows stereoselectivity toward trans C15-C15'zeta-carotene double bond. The zeta-carotene produced by the phytoene desaturase PDS has a C15-C15' double bond in the cis configuration and it requires isomerization before being recognized as substrate by ZDS. No activity with all-trans-zeta-carotene. The main product is 7,9,7',9'-tetra-cis-lycopene (pro-lycopene). This Capsicum annuum (Capsicum pepper) protein is Zeta-carotene desaturase, chloroplastic/chromoplastic (ZDS).